Reading from the N-terminus, the 377-residue chain is F-box protein At4g00755 (377 aa).

The region spanning 7–47 (LDTDTSLSILSCLDDPSDIVRASAVSRSWRQFVVKYSLSKN) is the F-box domain.

This chain is F-box protein At4g00755, found in Arabidopsis thaliana (Mouse-ear cress).